Here is a 371-residue protein sequence, read N- to C-terminus: Alanine racemase (371 aa).

Lys-35 (proton acceptor; specific for D-alanine) is an active-site residue. Lys-35 carries the post-translational modification N6-(pyridoxal phosphate)lysine. Arg-130 provides a ligand contact to substrate. The active-site Proton acceptor; specific for L-alanine is Tyr-256. Met-304 contributes to the substrate binding site.

The protein belongs to the alanine racemase family. Pyridoxal 5'-phosphate is required as a cofactor.

The enzyme catalyses L-alanine = D-alanine. Its pathway is amino-acid biosynthesis; D-alanine biosynthesis; D-alanine from L-alanine: step 1/1. Functionally, catalyzes the interconversion of L-alanine and D-alanine. May also act on other amino acids. This is Alanine racemase (alr) from Verminephrobacter eiseniae (strain EF01-2).